Here is a 417-residue protein sequence, read N- to C-terminus: 4-hydroxy-3-methylbut-2-en-1-yl diphosphate synthase (flavodoxin) (417 aa).

4 residues coordinate [4Fe-4S] cluster: C307, C310, C353, and E360.

This sequence belongs to the IspG family. It depends on [4Fe-4S] cluster as a cofactor.

The catalysed reaction is (2E)-4-hydroxy-3-methylbut-2-enyl diphosphate + oxidized [flavodoxin] + H2O + 2 H(+) = 2-C-methyl-D-erythritol 2,4-cyclic diphosphate + reduced [flavodoxin]. The protein operates within isoprenoid biosynthesis; isopentenyl diphosphate biosynthesis via DXP pathway; isopentenyl diphosphate from 1-deoxy-D-xylulose 5-phosphate: step 5/6. Converts 2C-methyl-D-erythritol 2,4-cyclodiphosphate (ME-2,4cPP) into 1-hydroxy-2-methyl-2-(E)-butenyl 4-diphosphate. The sequence is that of 4-hydroxy-3-methylbut-2-en-1-yl diphosphate synthase (flavodoxin) from Xylella fastidiosa (strain 9a5c).